We begin with the raw amino-acid sequence, 98 residues long: Integration host factor subunit alpha (98 aa).

The interval Phe-49–Ile-71 is disordered.

The protein belongs to the bacterial histone-like protein family. As to quaternary structure, heterodimer of an alpha and a beta chain.

Functionally, this protein is one of the two subunits of integration host factor, a specific DNA-binding protein that functions in genetic recombination as well as in transcriptional and translational control. In Pectobacterium atrosepticum (strain SCRI 1043 / ATCC BAA-672) (Erwinia carotovora subsp. atroseptica), this protein is Integration host factor subunit alpha.